The following is a 498-amino-acid chain: Sulfate adenylyltransferase subunit 1 (498 aa).

The tr-type G domain maps to 30–246; sequence TRPLRLITCG…LELATTRSAQ (217 aa). Residues 39 to 46 form a G1 region; that stretch reads GSVDDGKS. 39-46 provides a ligand contact to GTP; sequence GSVDDGKS. The segment at 97-101 is G2; sequence GITID. The segment at 118–121 is G3; it reads DTPG. Residues 118–122 and 173–176 each bind GTP; these read DTPGH and NKID. The G4 stretch occupies residues 173 to 176; the sequence is NKID. Residues 210 to 212 form a G5 region; sequence SAL.

Belongs to the TRAFAC class translation factor GTPase superfamily. Classic translation factor GTPase family. CysN/NodQ subfamily. As to quaternary structure, heterodimer composed of CysD, the smaller subunit, and CysN.

The catalysed reaction is sulfate + ATP + H(+) = adenosine 5'-phosphosulfate + diphosphate. It functions in the pathway sulfur metabolism; hydrogen sulfide biosynthesis; sulfite from sulfate: step 1/3. Its function is as follows. With CysD forms the ATP sulfurylase (ATPS) that catalyzes the adenylation of sulfate producing adenosine 5'-phosphosulfate (APS) and diphosphate, the first enzymatic step in sulfur assimilation pathway. APS synthesis involves the formation of a high-energy phosphoric-sulfuric acid anhydride bond driven by GTP hydrolysis by CysN coupled to ATP hydrolysis by CysD. The polypeptide is Sulfate adenylyltransferase subunit 1 (Rhizobium meliloti (strain 1021) (Ensifer meliloti)).